A 557-amino-acid chain; its full sequence is Leucine-rich glioma-inactivated protein 1 (557 aa).

Positions 1–34 (MESERSKRMGNACIPLKRIAYFLCLLSALLLTEG) are cleaved as a signal peptide. An LRRNT domain is found at 35-72 (KKPAKPKCPAVCTCTKDNALCENARSIPRTVPPDVISL). LRR repeat units follow at residues 92 to 113 (SLQL…AFIG), 116 to 137 (HLEY…TFRG), and 140 to 161 (SLIH…IFKG). One can recognise an LRRCT domain in the interval 173–223 (NSFNCDCKLKWLVEWLGHTNATVEDIYCEGPPEYKKRKINSLSSKDFDCII). N192 carries an N-linked (GlcNAc...) asparagine glycan. 7 EAR repeats span residues 225–267 (EFAK…EWDH), 271–313 (TFRN…KRDS), 317–364 (KFIK…KWNG), 366–415 (GFYS…QWNK), 419–462 (SFTN…KWGG), 464–506 (SFQD…NWDA), and 510–552 (KFVK…KHVI). The N-linked (GlcNAc...) asparagine glycan is linked to N277. The N-linked (GlcNAc...) asparagine glycan is linked to N422.

Oligomer. Interacts with KCNA1 within a complex containing KCNA1, KCNA4 and KCNAB1. Part of a complex containing ADAM22, DLG4/PSD95 and CACNG2 (stargazin). Can bind to ADAM11 and ADAM23. Post-translationally, glycosylated.

It is found in the secreted. Its subcellular location is the synapse. It localises to the cytoplasm. Its function is as follows. Regulates voltage-gated potassium channels assembled from KCNA1, KCNA4 and KCNAB1. It slows down channel inactivation by precluding channel closure mediated by the KCNAB1 subunit. Ligand for ADAM22 that positively regulates synaptic transmission mediated by AMPA-type glutamate receptors. Plays a role in suppressing the production of MMP1/3 through the phosphatidylinositol 3-kinase/ERK pathway. The sequence is that of Leucine-rich glioma-inactivated protein 1 (LGI1) from Pan troglodytes (Chimpanzee).